Reading from the N-terminus, the 161-residue chain is ATP synthase subunit b 1 (161 aa).

Residues 6-26 (EFYVALGFVIFVAILLYYGVH) form a helical membrane-spanning segment.

It belongs to the ATPase B chain family. In terms of assembly, F-type ATPases have 2 components, F(1) - the catalytic core - and F(0) - the membrane proton channel. F(1) has five subunits: alpha(3), beta(3), gamma(1), delta(1), epsilon(1). F(0) has three main subunits: a(1), b(2) and c(10-14). The alpha and beta chains form an alternating ring which encloses part of the gamma chain. F(1) is attached to F(0) by a central stalk formed by the gamma and epsilon chains, while a peripheral stalk is formed by the delta and b chains.

It is found in the cell inner membrane. Its function is as follows. F(1)F(0) ATP synthase produces ATP from ADP in the presence of a proton or sodium gradient. F-type ATPases consist of two structural domains, F(1) containing the extramembraneous catalytic core and F(0) containing the membrane proton channel, linked together by a central stalk and a peripheral stalk. During catalysis, ATP synthesis in the catalytic domain of F(1) is coupled via a rotary mechanism of the central stalk subunits to proton translocation. Component of the F(0) channel, it forms part of the peripheral stalk, linking F(1) to F(0). This Beijerinckia indica subsp. indica (strain ATCC 9039 / DSM 1715 / NCIMB 8712) protein is ATP synthase subunit b 1.